The sequence spans 139 residues: Acidic phospholipase A2 Ts-A4 (139 aa).

The signal sequence occupies residues 1–16; that stretch reads MRTLWILAVLLVGVEG. Disulfide bonds link cysteine 42–cysteine 132, cysteine 44–cysteine 60, cysteine 59–cysteine 111, cysteine 65–cysteine 139, cysteine 66–cysteine 104, cysteine 73–cysteine 97, and cysteine 91–cysteine 102. Ca(2+) is bound by residues tyrosine 43, glycine 45, and glycine 47. The active site involves histidine 63. Aspartate 64 is a binding site for Ca(2+). Aspartate 105 is an active-site residue.

Ca(2+) is required as a cofactor. As to expression, expressed by the venom gland.

The protein resides in the secreted. The enzyme catalyses a 1,2-diacyl-sn-glycero-3-phosphocholine + H2O = a 1-acyl-sn-glycero-3-phosphocholine + a fatty acid + H(+). Its function is as follows. PLA2 catalyzes the calcium-dependent hydrolysis of the 2-acyl groups in 3-sn-phosphoglycerides. In Trimeresurus stejnegeri (Chinese green tree viper), this protein is Acidic phospholipase A2 Ts-A4.